The primary structure comprises 162 residues: Phosphopantetheine adenylyltransferase (162 aa).

Thr-10 is a substrate binding site. Residues 10 to 11 (TF) and His-18 contribute to the ATP site. The substrate site is built by Lys-42, Met-74, and Arg-88. Residues 89 to 91 (GLR), Glu-99, and 124 to 130 (YAFLSST) each bind ATP.

The protein belongs to the bacterial CoaD family. As to quaternary structure, homohexamer. Requires Mg(2+) as cofactor.

The protein resides in the cytoplasm. It catalyses the reaction (R)-4'-phosphopantetheine + ATP + H(+) = 3'-dephospho-CoA + diphosphate. It participates in cofactor biosynthesis; coenzyme A biosynthesis; CoA from (R)-pantothenate: step 4/5. Functionally, reversibly transfers an adenylyl group from ATP to 4'-phosphopantetheine, yielding dephospho-CoA (dPCoA) and pyrophosphate. The sequence is that of Phosphopantetheine adenylyltransferase from Aliivibrio salmonicida (strain LFI1238) (Vibrio salmonicida (strain LFI1238)).